A 420-amino-acid chain; its full sequence is Protein maelstrom homolog (420 aa).

The segment at residues 4 to 73 (RRASRNAYYF…AQGKDSGPSE (70 aa)) is a DNA-binding region (HMG box). 3 disordered regions span residues 62–94 (RAAQGKDSGPSEKQKPVCTPLRKPGMLVPKQNV), 341–372 (GFSHFSSSNQEQRSNTPTGDYPSGVKISGQNS), and 392–420 (NIHKFSNCETPVSPYTSPKHGYKSFSSLS). Polar residues-rich tracts occupy residues 344–358 (HFSSSNQEQRSNTPT) and 392–407 (NIHKFSNCETPVSPYT).

Belongs to the maelstrom family. As to quaternary structure, interacts with SMARCB1, SIN3B and DDX4. Interacts with piRNA-associated proteins TDRD1, PIWIL1 and PIWIL2. Interacts with TEX19.

The protein localises to the cytoplasm. The protein resides in the nucleus. Functionally, plays a central role during spermatogenesis by repressing transposable elements and preventing their mobilization, which is essential for the germline integrity. Acts via the piRNA metabolic process, which mediates the repression of transposable elements during meiosis by forming complexes composed of piRNAs and Piwi proteins and governs the methylation and subsequent repression of transposons. Its association with piP-bodies suggests a participation in the secondary piRNAs metabolic process. Required for the localization of germ-cell factors to the meiotic nuage. The polypeptide is Protein maelstrom homolog (MAEL) (Bos taurus (Bovine)).